Reading from the N-terminus, the 251-residue chain is Triosephosphate isomerase (251 aa).

Substrate is bound at residue 9–11 (NWK). H95 serves as the catalytic Electrophile. The Proton acceptor role is filled by E167. Residues G173, S212, and 233-234 (GG) each bind substrate.

This sequence belongs to the triosephosphate isomerase family. Homodimer.

The protein localises to the cytoplasm. It catalyses the reaction D-glyceraldehyde 3-phosphate = dihydroxyacetone phosphate. Its pathway is carbohydrate biosynthesis; gluconeogenesis. The protein operates within carbohydrate degradation; glycolysis; D-glyceraldehyde 3-phosphate from glycerone phosphate: step 1/1. Functionally, involved in the gluconeogenesis. Catalyzes stereospecifically the conversion of dihydroxyacetone phosphate (DHAP) to D-glyceraldehyde-3-phosphate (G3P). This is Triosephosphate isomerase from Pseudomonas entomophila (strain L48).